Consider the following 277-residue polypeptide: Probable xyloglucan endotransglucosylase/hydrolase protein 11 (277 aa).

An N-terminal signal peptide occupies residues 1 to 24 (MRGSDQKILLMVMVVVAVVAAAQG). Residues 32-209 (VTWGNNYYQT…PKQMPYIAKF (178 aa)) form the GH16 domain. An N-linked (GlcNAc...) asparagine glycan is attached at N50. Catalysis depends on E107, which acts as the Nucleophile. Xyloglucan-binding positions include 123-125 (NTN) and 133-135 (GKD). N194 carries an N-linked (GlcNAc...) asparagine glycan. Cystine bridges form between C217–C227 and C260–C273. R265 contributes to the xyloglucan binding site.

It belongs to the glycosyl hydrolase 16 family. XTH group 1 subfamily. In terms of processing, contains at least one intrachain disulfide bond essential for its enzymatic activity.

It localises to the secreted. Its subcellular location is the cell wall. The protein localises to the extracellular space. It is found in the apoplast. It carries out the reaction breaks a beta-(1-&gt;4) bond in the backbone of a xyloglucan and transfers the xyloglucanyl segment on to O-4 of the non-reducing terminal glucose residue of an acceptor, which can be a xyloglucan or an oligosaccharide of xyloglucan.. In terms of biological role, may catalyze xyloglucan endohydrolysis (XEH) and/or endotransglycosylation (XET). Cleaves and religates xyloglucan polymers, an essential constituent of the primary cell wall, and thereby participates in cell wall construction of growing tissues. In Arabidopsis thaliana (Mouse-ear cress), this protein is Probable xyloglucan endotransglucosylase/hydrolase protein 11 (XTH11).